Consider the following 217-residue polypeptide: Small ribosomal subunit protein uS3c (217 aa).

One can recognise a KH type-2 domain in the interval 43–117; it reads IKNYVQKNKR…KLNIAITRIA (75 aa).

Belongs to the universal ribosomal protein uS3 family. In terms of assembly, part of the 30S ribosomal subunit.

The protein localises to the plastid. Its subcellular location is the chloroplast. In Platanus occidentalis (Sycamore), this protein is Small ribosomal subunit protein uS3c (rps3).